The chain runs to 224 residues: Precorrin-2 dehydrogenase (224 aa).

NAD(+)-binding positions include 26 to 27 (SV) and 47 to 50 (EFSQ).

It belongs to the precorrin-2 dehydrogenase / sirohydrochlorin ferrochelatase family. In terms of assembly, homodimer.

It carries out the reaction precorrin-2 + NAD(+) = sirohydrochlorin + NADH + 2 H(+). Its pathway is porphyrin-containing compound metabolism; siroheme biosynthesis; sirohydrochlorin from precorrin-2: step 1/1. In terms of biological role, involved in the archaeal biosynthesis of heme. Catalyzes the oxiation of precorrin-2 into sirohydroclorin. The protein is Precorrin-2 dehydrogenase of Methanosarcina barkeri (strain Fusaro / DSM 804).